A 334-amino-acid polypeptide reads, in one-letter code: Holliday junction branch migration complex subunit RuvB (334 aa).

The tract at residues 1–182 (MDKRMVDQEF…FGVHLRLEYY (182 aa)) is large ATPase domain (RuvB-L). ATP is bound by residues Leu-21, Arg-22, Gly-63, Lys-66, Thr-67, Thr-68, 129–131 (EDF), Arg-172, Tyr-182, and Arg-219. Residue Thr-67 coordinates Mg(2+). The interval 183 to 253 (NENDLKEIIT…TTKRALQLLQ (71 aa)) is small ATPAse domain (RuvB-S). Residues 256–334 (QHGLDYIDHK…HFNTTNEKRE (79 aa)) form a head domain (RuvB-H) region. The DNA site is built by Arg-292, Arg-311, and Arg-316.

Belongs to the RuvB family. In terms of assembly, homohexamer. Forms an RuvA(8)-RuvB(12)-Holliday junction (HJ) complex. HJ DNA is sandwiched between 2 RuvA tetramers; dsDNA enters through RuvA and exits via RuvB. An RuvB hexamer assembles on each DNA strand where it exits the tetramer. Each RuvB hexamer is contacted by two RuvA subunits (via domain III) on 2 adjacent RuvB subunits; this complex drives branch migration. In the full resolvosome a probable DNA-RuvA(4)-RuvB(12)-RuvC(2) complex forms which resolves the HJ.

Its subcellular location is the cytoplasm. It catalyses the reaction ATP + H2O = ADP + phosphate + H(+). Functionally, the RuvA-RuvB-RuvC complex processes Holliday junction (HJ) DNA during genetic recombination and DNA repair, while the RuvA-RuvB complex plays an important role in the rescue of blocked DNA replication forks via replication fork reversal (RFR). RuvA specifically binds to HJ cruciform DNA, conferring on it an open structure. The RuvB hexamer acts as an ATP-dependent pump, pulling dsDNA into and through the RuvAB complex. RuvB forms 2 homohexamers on either side of HJ DNA bound by 1 or 2 RuvA tetramers; 4 subunits per hexamer contact DNA at a time. Coordinated motions by a converter formed by DNA-disengaged RuvB subunits stimulates ATP hydrolysis and nucleotide exchange. Immobilization of the converter enables RuvB to convert the ATP-contained energy into a lever motion, pulling 2 nucleotides of DNA out of the RuvA tetramer per ATP hydrolyzed, thus driving DNA branch migration. The RuvB motors rotate together with the DNA substrate, which together with the progressing nucleotide cycle form the mechanistic basis for DNA recombination by continuous HJ branch migration. Branch migration allows RuvC to scan DNA until it finds its consensus sequence, where it cleaves and resolves cruciform DNA. The chain is Holliday junction branch migration complex subunit RuvB from Staphylococcus epidermidis (strain ATCC 35984 / DSM 28319 / BCRC 17069 / CCUG 31568 / BM 3577 / RP62A).